A 602-amino-acid chain; its full sequence is Probable translation initiation factor IF-2 (602 aa).

The tr-type G domain occupies Leu-10 to Met-227. The tract at residues Gly-19–Thr-26 is G1. Gly-19–Thr-26 is a GTP binding site. The interval Glu-44–Glu-48 is G2. Residues Asp-83–Gly-86 form a G3 region. GTP contacts are provided by residues Asp-83 to His-87 and Asn-137 to Asp-140. The interval Asn-137–Asp-140 is G4. Positions Ser-205–Lys-207 are G5.

It belongs to the TRAFAC class translation factor GTPase superfamily. Classic translation factor GTPase family. IF-2 subfamily.

Functionally, function in general translation initiation by promoting the binding of the formylmethionine-tRNA to ribosomes. Seems to function along with eIF-2. This is Probable translation initiation factor IF-2 from Sulfurisphaera tokodaii (strain DSM 16993 / JCM 10545 / NBRC 100140 / 7) (Sulfolobus tokodaii).